The chain runs to 266 residues: Putative hydro-lyase VF_1377 (266 aa).

This sequence belongs to the D-glutamate cyclase family.

The chain is Putative hydro-lyase VF_1377 from Aliivibrio fischeri (strain ATCC 700601 / ES114) (Vibrio fischeri).